We begin with the raw amino-acid sequence, 424 residues long: Arginine biosynthesis bifunctional protein ArgJ (424 aa).

Substrate-binding residues include threonine 172, lysine 198, threonine 209, glutamate 296, asparagine 419, and serine 424. Threonine 209 (nucleophile) is an active-site residue.

It belongs to the ArgJ family. As to quaternary structure, heterotetramer of two alpha and two beta chains.

It localises to the cytoplasm. It carries out the reaction N(2)-acetyl-L-ornithine + L-glutamate = N-acetyl-L-glutamate + L-ornithine. The catalysed reaction is L-glutamate + acetyl-CoA = N-acetyl-L-glutamate + CoA + H(+). The protein operates within amino-acid biosynthesis; L-arginine biosynthesis; L-ornithine and N-acetyl-L-glutamate from L-glutamate and N(2)-acetyl-L-ornithine (cyclic): step 1/1. It functions in the pathway amino-acid biosynthesis; L-arginine biosynthesis; N(2)-acetyl-L-ornithine from L-glutamate: step 1/4. Catalyzes two activities which are involved in the cyclic version of arginine biosynthesis: the synthesis of N-acetylglutamate from glutamate and acetyl-CoA as the acetyl donor, and of ornithine by transacetylation between N(2)-acetylornithine and glutamate. This Gluconobacter oxydans (strain 621H) (Gluconobacter suboxydans) protein is Arginine biosynthesis bifunctional protein ArgJ.